Here is a 563-residue protein sequence, read N- to C-terminus: Arylsulfatase K (563 aa).

The N-terminal stretch at 1–17 (MLLLLVSVIVALALVAP) is a signal peptide. The Ca(2+) site is built by D40 and C80. The active-site Nucleophile is C80. 3-oxoalanine (Cys) is present on C80. N-linked (GlcNAc...) asparagine glycosylation occurs at N108. K128 serves as a coordination point for substrate. N-linked (GlcNAc...) asparagine glycosylation is present at N191. H249 contributes to the substrate binding site. An N-linked (GlcNAc...) asparagine glycan is attached at N260. Positions 311 and 312 each coordinate Ca(2+). N-linked (GlcNAc...) asparagine glycans are attached at residues N373, N411, and N496.

The protein belongs to the sulfatase family. Ca(2+) serves as cofactor. The conversion to 3-oxoalanine (also known as C-formylglycine, FGly), of a serine or cysteine residue in prokaryotes and of a cysteine residue in eukaryotes, is critical for catalytic activity. In terms of processing, the 75-kDa precursor undergoes proteolytic processing to yield a 23 kDa form. Post-translationally, N-glycosylated with both high mannose and complex type sugars.

The protein resides in the secreted. Its subcellular location is the lysosome. It carries out the reaction an aryl sulfate + H2O = a phenol + sulfate + H(+). It catalyses the reaction Hydrolysis of the 2-sulfate groups of the 2-O-sulfo-D-glucuronate residues of chondroitin sulfate, heparin and heparitin sulfate.. Its function is as follows. Catalyzes the hydrolysis of pseudosubstrates such as p-nitrocatechol sulfate and p-nitrophenyl sulfate. Catalyzes the hydrolysis of the 2-sulfate groups of the 2-O-sulfo-D-glucuronate residues of chondroitin sulfate, heparin and heparitin sulfate. Acts selectively on 2-sulfoglucuronate and lacks activity against 2-sulfoiduronate. The sequence is that of Arylsulfatase K (Arsk) from Rattus norvegicus (Rat).